The primary structure comprises 748 residues: MERPQSSIWVFMLLLFMVLLQSPAWHVAAQRCPQTCVCDNSRRHVTCRHQNLTEVPNTIPELTQRLDLQGNILKVLPAAAFQDLPHLTHLDLRNCQVEMVAEGAFRGLGRLLLLNLASNRLSTLPQEALDGLGSLRRLELEGNMLEELRPGTFGALGSLTTLNLAHNALVYLPAMAFQGLLRTRWLQLSHNALSVLAPEALAGLPALRRLSLHHNELQALPGAALSQARSLARLELGHNPLTYTGEEDGLALPGLRELALDHGSLQALGPRAFAHCPRLHTLDLRGNQLTTLPPLQVPGQLRRLRLQGNPLWCACHARPLLEWLVRARVRSDGACRGPRRLRGEALDTLRPSDLRCPGDAAAGDGDGDEDEDRPAGPRAPPLRSPHGEAAWATPCPPACACVAETRHSTCDGRGLQAVPRGFPNDTQLLDLRRNHFPSVPRAAFPGLRHLVSLHLQHCGVAELEPGALAGLDRLLYLYLSHNQLSGLSAAALEGAPNLGYLYLEHNRFLRIPGTALRALPTLVSLHLQDNAVDRLAPGDLAGARALRCLYLSGNHITQVSPGALGPARELEKLHLDRNRLREVPTGALEGLPALKELQLSGNPLRALPDGAFQPVGRSLQQLFLNSSDLEQISPRAFSGLGKGLRSLYLHKNQLQSLPAPLGLSGLELVDLSGNPFHCDCQLLPLHRWLTGLNLRVGATCATPPSVRGQKVKVAAPVFEACPGWTARKAKRTPTSRGSARRTPSLSRH.

Residues 1–29 (MERPQSSIWVFMLLLFMVLLQSPAWHVAA) form the signal peptide. In terms of domain architecture, LRRNT 1 spans 30-61 (QRCPQTCVCDNSRRHVTCRHQNLTEVPNTIPE). Asparagine 51 carries N-linked (GlcNAc...) asparagine glycosylation. LRR repeat units follow at residues 85–107 (PHLTHLDLRNCQVEMVAEGAFRG), 108–131 (LGRLLLLNLASNRLSTLPQEALDG), 132–155 (LGSLRRLELEGNMLEELRPGTFGA), 156–179 (LGSLTTLNLAHNALVYLPAMAFQG), 181–203 (LRTRWLQLSHNALSVLAPEALAG), 204–227 (LPALRRLSLHHNELQALPGAALSQ), 229–252 (RSLARLELGHNPLTYTGEEDGLAL), 253–275 (PGLRELALDHGSLQALGPRAFAH), and 276–299 (CPRLHTLDLRGNQLTTLPPLQVPG). The LRRCT 1 domain maps to 309 to 357 (NPLWCACHARPLLEWLVRARVRSDGACRGPRRLRGEALDTLRPSDLRCP). The segment at 352-389 (SDLRCPGDAAAGDGDGDEDEDRPAGPRAPPLRSPHGEA) is disordered. An LRRNT 2 domain is found at 394-428 (PCPPACACVAETRHSTCDGRGLQAVPRGFPNDTQL). Cysteines 395 and 410 form a disulfide. 10 LRR repeats span residues 423–446 (PNDTQLLDLRRNHFPSVPRAAFPG), 448–470 (RHLVSLHLQHCGVAELEPGALAG), 471–494 (LDRLLYLYLSHNQLSGLSAAALEG), 496–518 (PNLGYLYLEHNRFLRIPGTALRA), 519–542 (LPTLVSLHLQDNAVDRLAPGDLAG), 544–566 (RALRCLYLSGNHITQVSPGALGP), 567–590 (ARELEKLHLDRNRLREVPTGALEG), 591–614 (LPALKELQLSGNPLRALPDGAFQP), 616–639 (GRSLQQLFLNSSDLEQISPRAFSG), and 641–665 (GKGLRSLYLHKNQLQSLPAPLGLSG). A glycan (N-linked (GlcNAc...) asparagine) is linked at asparagine 625. Residues 674-722 (NPFHCDCQLLPLHRWLTGLNLRVGATCATPPSVRGQKVKVAAPVFEACP) form the LRRCT 2 domain. 2 disulfide bridges follow: cysteine 678–cysteine 721 and cysteine 680–cysteine 700. The segment at 728–748 (KAKRTPTSRGSARRTPSLSRH) is disordered. The span at 734–748 (TSRGSARRTPSLSRH) shows a compositional bias: polar residues.

The protein belongs to the small leucine-rich proteoglycan (SLRP) family. SLRP class IV subfamily. Associates with collagen and binds to collagen fibrils. In terms of tissue distribution, expressed in cartilage, including articular knee cartilage, where it localizes to the extracellular space in the area immediately surrounding the chondrocytes, not detected in any other tissues (at protein level).

It localises to the secreted. The protein localises to the extracellular space. It is found in the extracellular matrix. Potential negative modulator of chondrocyte differentiation. Inhibits collagen fibrillogenesis in vitro. May influence chondrocyte's differentiation by acting on its cellular collagenous microenvironment. The chain is Chondroadherin-like protein (Chadl) from Mus musculus (Mouse).